An 874-amino-acid chain; its full sequence is Alanine--tRNA ligase (874 aa).

Residues histidine 563, histidine 567, cysteine 665, and histidine 669 each contribute to the Zn(2+) site.

Belongs to the class-II aminoacyl-tRNA synthetase family. Zn(2+) is required as a cofactor.

The protein localises to the cytoplasm. The enzyme catalyses tRNA(Ala) + L-alanine + ATP = L-alanyl-tRNA(Ala) + AMP + diphosphate. Catalyzes the attachment of alanine to tRNA(Ala) in a two-step reaction: alanine is first activated by ATP to form Ala-AMP and then transferred to the acceptor end of tRNA(Ala). Also edits incorrectly charged Ser-tRNA(Ala) and Gly-tRNA(Ala) via its editing domain. This Actinobacillus pleuropneumoniae serotype 3 (strain JL03) protein is Alanine--tRNA ligase.